The chain runs to 593 residues: MAKKGGKNNKSKKEVTPPTSDVEDEVQDKFKEMRLNAFTATGALASKESSRDVKIEQVTLTFHGKELLSDTTVEINFGRRYGLIGQNGCGKSTFFQCLAVRELPIPEHIDIFHLSEEAHPSERTALQSVIDDAEKEVKRLEVLEERLLEEQGPESEELFDVYERLENLDPTTFVPRASEILIGLGFTSQTMLKKTKDLSGGWRMRVSLAKALFIKPTLLLLDEPTNHLDLGACVWLEDYLANYDRSLIIISHSQDFLNAVCTNIIHMTQSKLKYYGGNYDNFVKTKAELEVNQMKAYHKQQEEIAHIKSFIASCGTYSNLVRQGKSKQKIIDKMEEAGLVERVQEDKIFNFSFPPCGELAPPIMHFDNVTFSYSGKEADVLYRNLDLAIDLDSRIALVGPNGAGKSTLLKLMVGQISPTQGFIKKHSHLKMARYHQHAHEVLDLTATPLDFVRSKFAHMNKDTEEWRREIGRFGVTGKAQTEAIGCMSDGIKSRLIFCLMALENPHLLLLDEPTNHLDMECIDSLALAINSFPGGMILVSHDFRLISQVAKEIWVCDNKTITKWAGDITSYKNHLKAQMRDLTKQGALASLKK.

The span at 1–10 (MAKKGGKNNK) shows a compositional bias: basic residues. The tract at residues 1–25 (MAKKGGKNNKSKKEVTPPTSDVEDE) is disordered. ABC transporter domains lie at 53–294 (VKIE…VNQM) and 364–583 (MHFD…RDLT). ATP-binding positions include 85-92 (GQNGCGKS) and 399-406 (GPNGAGKS).

It belongs to the ABC transporter superfamily. ABCF family. EF3 subfamily.

The protein is ABC transporter F family member 2 (abcF2) of Dictyostelium discoideum (Social amoeba).